A 411-amino-acid chain; its full sequence is Tyrosine--tRNA ligase (411 aa).

Residue Tyr33 participates in L-tyrosine binding. The short motif at 38–47 (PTAESLHLGN) is the 'HIGH' region element. L-tyrosine is bound by residues Tyr160 and Gln164. Positions 222–226 (KIGKS) match the 'KMSKS' region motif. Lys225 is a binding site for ATP. The S4 RNA-binding domain occupies 347 to 411 (SVIETLIKNK…KKQVILFKTV (65 aa)).

The protein belongs to the class-I aminoacyl-tRNA synthetase family. TyrS type 1 subfamily. Homodimer.

It is found in the cytoplasm. The enzyme catalyses tRNA(Tyr) + L-tyrosine + ATP = L-tyrosyl-tRNA(Tyr) + AMP + diphosphate + H(+). Catalyzes the attachment of tyrosine to tRNA(Tyr) in a two-step reaction: tyrosine is first activated by ATP to form Tyr-AMP and then transferred to the acceptor end of tRNA(Tyr). The chain is Tyrosine--tRNA ligase from Mycoplasmopsis agalactiae (strain NCTC 10123 / CIP 59.7 / PG2) (Mycoplasma agalactiae).